The sequence spans 287 residues: MAGAKEIRSKIASVQNTQKITKAMEMVAASKMRKSQERMAASRPYAETMRSVIGHLALGNLEYKHPYLEERDVKRVGYLVVSTDRGLCGGLNINLFKRLLAEMKGWSEKGVECDLALIGSKAASFFGSVGGKIVAQVTGMGDNPSLSELIGPVKVMLQAYDEGRLDKLYIVNNKFINTMSQEPRIMQLLPLPPAEDGELKKKSWDYLYEPDPKALLDTLLRRYVESQVYQGVVENLASEQAARMVAMKAATDNGGSLIKELQLVYNKARQASITQELTEIVGGASAV.

It belongs to the ATPase gamma chain family. In terms of assembly, F-type ATPases have 2 components, CF(1) - the catalytic core - and CF(0) - the membrane proton channel. CF(1) has five subunits: alpha(3), beta(3), gamma(1), delta(1), epsilon(1). CF(0) has three main subunits: a, b and c.

It is found in the cell inner membrane. In terms of biological role, produces ATP from ADP in the presence of a proton gradient across the membrane. The gamma chain is believed to be important in regulating ATPase activity and the flow of protons through the CF(0) complex. The chain is ATP synthase gamma chain from Yersinia pestis.